The following is a 150-amino-acid chain: MSDKLHVLLLNGPNLNLLGTREPEKYGHTSLDEIVSELTLQASALGVTLSHLQSNAEHALIDRIHQAKGNVDYIVINPAAFTHTSVALRDALLAVSIPFIEVHLSNVHAREPFRHHSYLSDISTGVICGLGVDGYSWALQTAVKRLSLSH.

Tyrosine 26 functions as the Proton acceptor in the catalytic mechanism. 3 residues coordinate substrate: asparagine 77, histidine 83, and aspartate 90. Catalysis depends on histidine 103, which acts as the Proton donor. Residues 104–105 (LS) and arginine 114 contribute to the substrate site.

The protein belongs to the type-II 3-dehydroquinase family. As to quaternary structure, homododecamer.

It catalyses the reaction 3-dehydroquinate = 3-dehydroshikimate + H2O. The protein operates within metabolic intermediate biosynthesis; chorismate biosynthesis; chorismate from D-erythrose 4-phosphate and phosphoenolpyruvate: step 3/7. Catalyzes a trans-dehydration via an enolate intermediate. The sequence is that of 3-dehydroquinate dehydratase from Erwinia tasmaniensis (strain DSM 17950 / CFBP 7177 / CIP 109463 / NCPPB 4357 / Et1/99).